Here is a 148-residue protein sequence, read N- to C-terminus: FAD synthase (148 aa).

Residues 14-15, 19-22, and aspartate 100 each bind ATP; these read VF and HVGH.

This sequence belongs to the archaeal FAD synthase family. As to quaternary structure, homodimer. A divalent metal cation is required as a cofactor.

The catalysed reaction is FMN + ATP + H(+) = FAD + diphosphate. The protein operates within cofactor biosynthesis; FAD biosynthesis; FAD from FMN: step 1/1. Its function is as follows. Catalyzes the transfer of the AMP portion of ATP to flavin mononucleotide (FMN) to produce flavin adenine dinucleotide (FAD) coenzyme. This chain is FAD synthase, found in Pyrococcus abyssi (strain GE5 / Orsay).